A 440-amino-acid chain; its full sequence is MDRWQGIQHVVVVGLGITGLSVVNYLRKYHPSVTVQVIDTREIPPGQEQLSSDVALHRGGWNLEWLLNADLVVTNPGIALATPEIQQVLAAGIPVVGDIELFAWHVDTPVIAITGSNGKSTVTDLSGVLANAAGVKAAVGGNIGVPALDLISPDVELYVLELSSFQLETTSSLKLKAAAFLNLSEDHMDRYQGMGDYRQAKLRIFDHAETAVVNADDTQTFPDHAAHLQVVTFGVEQAAQFSLAQHQGREYLFARDEAVMACAELSLVGRHNVTNVLTVLALLDSAGVNFRLALDALKSYTGLTHRCQVVADNHGIKWVNDSKATNVASTLAALSGLKIEGQLYLLVGGVGKGADFTPLAPVLATLPVQLCCFGVDGHQFMPLHPSARFYDSMESIIRSIRPQLKSGDMVLLSPACASFDQFKNFMARGDIFAQLARQYA.

Residue 115-121 (GSNGKST) coordinates ATP.

This sequence belongs to the MurCDEF family.

Its subcellular location is the cytoplasm. The enzyme catalyses UDP-N-acetyl-alpha-D-muramoyl-L-alanine + D-glutamate + ATP = UDP-N-acetyl-alpha-D-muramoyl-L-alanyl-D-glutamate + ADP + phosphate + H(+). Its pathway is cell wall biogenesis; peptidoglycan biosynthesis. Cell wall formation. Catalyzes the addition of glutamate to the nucleotide precursor UDP-N-acetylmuramoyl-L-alanine (UMA). The sequence is that of UDP-N-acetylmuramoylalanine--D-glutamate ligase from Vibrio cholerae serotype O1 (strain ATCC 39541 / Classical Ogawa 395 / O395).